A 464-amino-acid polypeptide reads, in one-letter code: MSTDKTNQSWGGRFSEPVDAFVARFTASVTFDQRLYRHDIMGSIAHATMLAKVGVLTDAERDTIVDGLNTIQAEIEAGNFEWRVDLEDVHMNIEARLTDRIGITGKKLHTGRSRNDQVATDIRLWLRDEIDLILSEITRLQKGLLVQAERESDTIMPGFTHLQTAQPVTFGHHMLAWFEMLSRDYERLVDCRKRLNRMPLGSAALAGTTYPIDRELTCKLLGFDVVGGNSLDGVSDRDFAIEFCSAASIAMMHLSRFSEELVLWTSAQFQFIDLPDRFCTGSSIMPQKKNPDVPELVRGKSGRVFGALMGLLTLMKGQPLAYNKDNQEDKEPLFDAADTLRDSLRAFADMIPAIKPRHAIMREAALRGFSTATDLADYLVRRGLPFRDCHEIVGHAVKYGVETGKDLAEMSLEELRQFSNQIEQDVFAVLTLEGSVNARNHVGGTAPEQVRAAVARGQELLAGR.

Belongs to the lyase 1 family. Argininosuccinate lyase subfamily.

It localises to the cytoplasm. It catalyses the reaction 2-(N(omega)-L-arginino)succinate = fumarate + L-arginine. The protein operates within amino-acid biosynthesis; L-arginine biosynthesis; L-arginine from L-ornithine and carbamoyl phosphate: step 3/3. This is Argininosuccinate lyase from Pseudomonas syringae pv. tomato (strain ATCC BAA-871 / DC3000).